Reading from the N-terminus, the 471-residue chain is Anthocyanidin 3-O-glucosyltransferase (471 aa).

His-24 (proton acceptor) is an active-site residue. An anthocyanidin is bound at residue His-24. Residue Asp-130 is the Charge relay of the active site. Residue Thr-152 participates in UDP-alpha-D-glucose binding. His-161 contributes to the an anthocyanidin binding site. 6 residues coordinate UDP-alpha-D-glucose: Ala-352, Gln-354, His-369, Trp-372, Ser-374, and Glu-377. Gly-392 contributes to the an anthocyanidin binding site. Residues Asp-393 and Gln-394 each coordinate UDP-alpha-D-glucose.

This sequence belongs to the UDP-glycosyltransferase family.

It catalyses the reaction an anthocyanidin + UDP-alpha-D-glucose + H(+) = an anthocyanidin 3-O-beta-D-glucoside + UDP. It functions in the pathway pigment biosynthesis; anthocyanin biosynthesis. In terms of biological role, in the presence of other necessary color factors, this glycosylation reaction allows the accumulation of anthocyanin pigments. In Zea mays (Maize), this protein is Anthocyanidin 3-O-glucosyltransferase (BZ1).